Here is a 955-residue protein sequence, read N- to C-terminus: MLFEDRQKNRSTGPTLIGFNQTQNEHENTVCPTHPESSDRILKIKEALTKTKILEKCTVLTNFLEIDDADLEVTHDKSMVKDLMESEKKTQEDINSQCEKYDSVFMTENSMKVAKDGVACVRDLTNRIMANEASNGFAVVRPPGHHADSVSPCGFCLFNNVAQAAEEAFFSGAERILIVDLDVHHGHGTQRIFYDDKRVLYFSIHRHEHGLFWPHLPESDFDHIGSGKGLGYNANLALNETGCTDSDYLSIIFHVLLPLATQFDPHFVIISAGFDALLGDPLGGMCLTPDGYSHILYHLKSLAQGRMLVVLEGGYNHQISAVAVQRCVRVLLGYAPFSIELNEAPKESTVDSCVSLVSVLRHHWNCFDYFPSRTSLRLAQWPIVNTKVIYNYDPTTRRADTGEIIQDELASTEFTASDVIPTENMETLIYFNEGDDAHFDLEEDNHPEKPARTRRILKTLRESGVLEKCVDRNCERIATNEEIRLVHTKKMLEHLRTTETMKDEELMEEAEKEFNSIYLTRDTLKVARKAVGAVLQSVDEIFEKDAGQRNALVIVRPPGHHASASKSSGFCIFNNVAVAAKYAQRRHKAKRVLILDWDVHHGNGTQEIFYEDSNVMYMSIHRHDKGNFYPIGEPKDYSDVGEGAGEGMSVNVPFSGVQMGDNEYQMAFQRVIMPIAYQFNPDLVLISAGFDAAVDDPLGEYKVTPETFALMTYQLSSLAGGRIITVLEGGYNLTSISNSAQAVCEVLQNRSMLRRLREEKEQFATKPQKIESSCIKTIREVCAVQQKYWSILKGFQVTPSNYGLDIDDEAYDDDSIDMADQSSSSGSSSSSTRPSHNLEIMDSGPAHAVVPLATCPHLKEVKPLPPAKINARTACSECQIGAEVWTCLTCYKYNCGRFVNEHAMMHHLSSSHPMALSMADLSVWCYPCDSYVHNPALIGAKSAAHESKFGETMPS.

Histone deacetylase stretches follow at residues 15–337 (TLIG…YAPF) and 425–749 (METL…VLQN). H146 functions as the 1 in the catalytic mechanism. Catalysis depends on H561, which acts as the 2. A disordered region spans residues 815-840 (SIDMADQSSSSGSSSSSTRPSHNLEI). Positions 818-831 (MADQSSSSGSSSSS) are enriched in low complexity. The UBP-type zinc-finger motif lies at 853 to 951 (ATCPHLKEVK…SAAHESKFGE (99 aa)). Positions 855, 857, 875, 878, 887, 890, and 895 each coordinate Zn(2+). The ubiquitin binding stretch occupies residues 896–898 (GRF). 5 residues coordinate Zn(2+): H902, H906, H912, C925, and C928. The ubiquitin binding stretch occupies residues 924 to 931 (WCYPCDSY).

This sequence belongs to the histone deacetylase family. HD type 2 subfamily. Requires Zn(2+) as cofactor.

Its subcellular location is the nucleus. The enzyme catalyses N(6)-acetyl-L-lysyl-[histone] + H2O = L-lysyl-[histone] + acetate. In terms of biological role, probable histone deacetylase. Histone deacetylases are responsible for the deacetylation of lysine residues on the N-terminal part of the core histones (H2A, H2B, H3 and H4). Histone deacetylation gives a tag for epigenetic repression and plays an important role in transcriptional regulation, cell cycle progression and developmental events. Histone deacetylases act via the formation of large multiprotein complexes. In Caenorhabditis elegans, this protein is Histone deacetylase 6 (hda-6).